Reading from the N-terminus, the 355-residue chain is Elongation factor Ts, mitochondrial (355 aa).

The N-terminal 46 residues, 1–46 (MIRSLNFALRNCNKNILINSNKITINNGLLLKKNNFCTQSTSEVKV), are a transit peptide targeting the mitochondrion.

Belongs to the EF-Ts family.

The protein resides in the mitochondrion. Functionally, associates with the EF-Tu.GDP complex and induces the exchange of GDP to GTP. It remains bound to the aminoacyl-tRNA.EF-Tu.GTP complex up to the GTP hydrolysis stage on the ribosome. The polypeptide is Elongation factor Ts, mitochondrial (tsfm) (Dictyostelium discoideum (Social amoeba)).